The primary structure comprises 589 residues: tRNA (guanine(26)-N(2))-dimethyltransferase 2 (589 aa).

One can recognise a Trm1 methyltransferase domain in the interval 9–465 (TVIKEGEAEI…APMEVIWDIM (457 aa)). Arg36 serves as a coordination point for S-adenosyl-L-methionine. The disordered stretch occupies residues 51–122 (KQEHEAKSSK…RFAPREPKPP (72 aa)). Basic and acidic residues-rich tracts occupy residues 68 to 81 (VIEK…KEET) and 106 to 122 (DPAK…PKPP). Positions 134, 152, and 185 each coordinate S-adenosyl-L-methionine. Positions 315, 318, 350, and 353 each coordinate Zn(2+). The interval 550-589 (LSQHHEELKEEDEEAEPEDNVQDKVDPKRQKTATDNITST) is disordered. Residues 558-569 (KEEDEEAEPEDN) are compositionally biased toward acidic residues.

It belongs to the class I-like SAM-binding methyltransferase superfamily. Trm1 family.

The enzyme catalyses guanosine(26) in tRNA + 2 S-adenosyl-L-methionine = N(2)-dimethylguanosine(26) in tRNA + 2 S-adenosyl-L-homocysteine + 2 H(+). Functionally, dimethylates a single guanine residue at position 26 of most tRNAs using S-adenosyl-L-methionine as donor of the methyl groups. The polypeptide is tRNA (guanine(26)-N(2))-dimethyltransferase 2 (Arabidopsis thaliana (Mouse-ear cress)).